We begin with the raw amino-acid sequence, 154 residues long: Endoribonuclease YbeY (154 aa).

3 residues coordinate Zn(2+): histidine 114, histidine 118, and histidine 124.

Belongs to the endoribonuclease YbeY family. The cofactor is Zn(2+).

The protein resides in the cytoplasm. Its function is as follows. Single strand-specific metallo-endoribonuclease involved in late-stage 70S ribosome quality control and in maturation of the 3' terminus of the 16S rRNA. This is Endoribonuclease YbeY from Haemophilus influenzae (strain 86-028NP).